Reading from the N-terminus, the 455-residue chain is Genome polyprotein (455 aa).

The For nuclear inclusion protein A activity role is filled by Cys5. Positions 182 to 198 (NLDAGKESKKETSDKGN) are enriched in basic and acidic residues. The interval 182-225 (NLDAGKESKKETSDKGNKPQNSQVGQGSKEPTKTGTVSKDVNVG) is disordered.

It belongs to the potyviridae genome polyprotein family. Post-translationally, genome polyprotein of potyviruses undergoes post-translational proteolytic processing by the main proteinase NIa-pro resulting in the production of at least ten individual proteins. The P1 proteinase and the HC-pro cleave only their respective C-termini autocatalytically. 6K1 is essential for proper proteolytic separation of P3 from CI.

The protein resides in the virion. The enzyme catalyses RNA(n) + a ribonucleoside 5'-triphosphate = RNA(n+1) + diphosphate. An RNA-dependent RNA polymerase that plays an essential role in the virus replication. Its function is as follows. Involved in aphid transmission, cell-to-cell and systemis movement, encapsidation of the viral RNA and in the regulation of viral RNA amplification. The protein is Genome polyprotein of Citrullus lanatus (Watermelon).